The following is a 316-amino-acid chain: Aspartate carbamoyltransferase catalytic subunit (316 aa).

Positions 58 and 59 each coordinate carbamoyl phosphate. Lysine 86 serves as a coordination point for L-aspartate. The carbamoyl phosphate site is built by arginine 108, histidine 136, and glutamine 139. Residues arginine 169 and arginine 223 each contribute to the L-aspartate site. 2 residues coordinate carbamoyl phosphate: glycine 264 and proline 265.

Belongs to the aspartate/ornithine carbamoyltransferase superfamily. ATCase family. As to quaternary structure, heterododecamer (2C3:3R2) of six catalytic PyrB chains organized as two trimers (C3), and six regulatory PyrI chains organized as three dimers (R2).

The enzyme catalyses carbamoyl phosphate + L-aspartate = N-carbamoyl-L-aspartate + phosphate + H(+). It functions in the pathway pyrimidine metabolism; UMP biosynthesis via de novo pathway; (S)-dihydroorotate from bicarbonate: step 2/3. Its function is as follows. Catalyzes the condensation of carbamoyl phosphate and aspartate to form carbamoyl aspartate and inorganic phosphate, the committed step in the de novo pyrimidine nucleotide biosynthesis pathway. The polypeptide is Aspartate carbamoyltransferase catalytic subunit (Granulibacter bethesdensis (strain ATCC BAA-1260 / CGDNIH1)).